The following is a 141-amino-acid chain: Large-conductance mechanosensitive channel (141 aa).

A run of 2 helical transmembrane segments spans residues 16–36 (VIDL…VDSL) and 83–103 (GAFI…FVAI).

Belongs to the MscL family. Homopentamer.

Its subcellular location is the cell inner membrane. Functionally, channel that opens in response to stretch forces in the membrane lipid bilayer. May participate in the regulation of osmotic pressure changes within the cell. This Azoarcus sp. (strain BH72) protein is Large-conductance mechanosensitive channel.